A 202-amino-acid polypeptide reads, in one-letter code: uncharacterized protein (202 aa).

The chain crosses the membrane as a helical span at residues 18-38; sequence FLIFLIFLSVLGCGITISGCI.

It is found in the membrane. This is an uncharacterized protein from Methanocaldococcus jannaschii (strain ATCC 43067 / DSM 2661 / JAL-1 / JCM 10045 / NBRC 100440) (Methanococcus jannaschii).